An 84-amino-acid polypeptide reads, in one-letter code: Toxin To10 (84 aa).

Residues 1–19 form the signal peptide; sequence MNYSTLIAVASLLTAGTES. Residues 21 to 80 enclose the LCN-type CS-alpha/beta domain; sequence KDGYPVEGSCAFPCGYDNAYCDKLCKERKADSGYCYWVNILCYCYGLPDNAAIKGYGRCK. 4 disulfide bridges follow: Cys-30-Cys-79, Cys-34-Cys-55, Cys-41-Cys-62, and Cys-45-Cys-64. At Pro-81 the chain carries Proline amide.

This sequence belongs to the long (4 C-C) scorpion toxin superfamily. Sodium channel inhibitor family. Alpha subfamily. As to expression, expressed by the venom gland.

The protein resides in the secreted. In terms of biological role, alpha toxins bind voltage-independently at site-3 of sodium channels (Nav) and inhibit the inactivation of the activated channels, thereby blocking neuronal transmission. This Tityus obscurus (Amazonian scorpion) protein is Toxin To10.